A 384-amino-acid chain; its full sequence is S-adenosylmethionine synthase (384 aa).

Histidine 15 provides a ligand contact to ATP. A Mg(2+)-binding site is contributed by aspartate 17. Glutamate 43 is a binding site for K(+). Residues glutamate 56 and glutamine 99 each coordinate L-methionine. The interval 99-109 (QSPDINQGVDR) is flexible loop. ATP-binding positions include 164–166 (DAK), 230–231 (RF), aspartate 239, 245–246 (RK), alanine 262, and lysine 266. An L-methionine-binding site is contributed by aspartate 239. Lysine 270 lines the L-methionine pocket.

It belongs to the AdoMet synthase family. In terms of assembly, homotetramer; dimer of dimers. Mg(2+) serves as cofactor. Requires K(+) as cofactor.

The protein localises to the cytoplasm. It catalyses the reaction L-methionine + ATP + H2O = S-adenosyl-L-methionine + phosphate + diphosphate. It functions in the pathway amino-acid biosynthesis; S-adenosyl-L-methionine biosynthesis; S-adenosyl-L-methionine from L-methionine: step 1/1. In terms of biological role, catalyzes the formation of S-adenosylmethionine (AdoMet) from methionine and ATP. The overall synthetic reaction is composed of two sequential steps, AdoMet formation and the subsequent tripolyphosphate hydrolysis which occurs prior to release of AdoMet from the enzyme. The polypeptide is S-adenosylmethionine synthase (Yersinia enterocolitica serotype O:8 / biotype 1B (strain NCTC 13174 / 8081)).